The chain runs to 344 residues: Sulfate/thiosulfate import ATP-binding protein CysA (344 aa).

In terms of domain architecture, ABC transporter spans 3–233 (ILIDNVSKNF…PESAFVMSFL (231 aa)). 35–42 (GPSGCGKS) provides a ligand contact to ATP.

The protein belongs to the ABC transporter superfamily. Sulfate/tungstate importer (TC 3.A.1.6) family. In terms of assembly, the complex is composed of two ATP-binding proteins (CysA), two transmembrane proteins (CysT and CysW) and a solute-binding protein (CysP).

It is found in the cell inner membrane. It catalyses the reaction sulfate(out) + ATP + H2O = sulfate(in) + ADP + phosphate + H(+). It carries out the reaction thiosulfate(out) + ATP + H2O = thiosulfate(in) + ADP + phosphate + H(+). Its function is as follows. Part of the ABC transporter complex CysAWTP involved in sulfate/thiosulfate import. Responsible for energy coupling to the transport system. This chain is Sulfate/thiosulfate import ATP-binding protein CysA, found in Gloeobacter violaceus (strain ATCC 29082 / PCC 7421).